Consider the following 356-residue polypeptide: DNA polymerase IV (356 aa).

One can recognise a UmuC domain in the interval 7–188; that stretch reads IIHIDMDCFY…LPLKKIPRVG (182 aa). Mg(2+) is bound by residues aspartate 11 and aspartate 106. The active site involves glutamate 107.

The protein belongs to the DNA polymerase type-Y family. As to quaternary structure, monomer. The cofactor is Mg(2+).

Its subcellular location is the cytoplasm. The catalysed reaction is DNA(n) + a 2'-deoxyribonucleoside 5'-triphosphate = DNA(n+1) + diphosphate. In terms of biological role, poorly processive, error-prone DNA polymerase involved in untargeted mutagenesis. Copies undamaged DNA at stalled replication forks, which arise in vivo from mismatched or misaligned primer ends. These misaligned primers can be extended by PolIV. Exhibits no 3'-5' exonuclease (proofreading) activity. May be involved in translesional synthesis, in conjunction with the beta clamp from PolIII. The polypeptide is DNA polymerase IV (Actinobacillus pleuropneumoniae serotype 5b (strain L20)).